Here is a 180-residue protein sequence, read N- to C-terminus: Translation initiation factor IF-3 (180 aa).

Belongs to the IF-3 family. In terms of assembly, monomer.

It is found in the cytoplasm. In terms of biological role, IF-3 binds to the 30S ribosomal subunit and shifts the equilibrium between 70S ribosomes and their 50S and 30S subunits in favor of the free subunits, thus enhancing the availability of 30S subunits on which protein synthesis initiation begins. The sequence is that of Translation initiation factor IF-3 from Shewanella oneidensis (strain ATCC 700550 / JCM 31522 / CIP 106686 / LMG 19005 / NCIMB 14063 / MR-1).